We begin with the raw amino-acid sequence, 246 residues long: Ribosome maturation factor RimM (246 aa).

Residues 1–15 (MKRKQESKGAGEKRQ) are compositionally biased toward basic and acidic residues. The tract at residues 1-63 (MKRKQESKGA…NPQFTTPNPD (63 aa)) is disordered. The span at 45–54 (VPSPQSPIPN) shows a compositional bias: pro residues. The region spanning 158-239 (GEDEYHVVDL…RIEITPPPGL (82 aa)) is the PRC barrel domain.

It belongs to the RimM family. As to quaternary structure, binds ribosomal protein uS19.

It is found in the cytoplasm. In terms of biological role, an accessory protein needed during the final step in the assembly of 30S ribosomal subunit, possibly for assembly of the head region. Essential for efficient processing of 16S rRNA. May be needed both before and after RbfA during the maturation of 16S rRNA. It has affinity for free ribosomal 30S subunits but not for 70S ribosomes. This is Ribosome maturation factor RimM from Nostoc sp. (strain PCC 7120 / SAG 25.82 / UTEX 2576).